Reading from the N-terminus, the 434-residue chain is ATP-dependent RNA helicase RhlB (434 aa).

Positions 9 to 37 (QKFADLGLEPQVLDGLNAKGFINCTPIQA) match the Q motif motif. The Helicase ATP-binding domain occupies 40-219 (LPVLLAGQDI…FEHMQEPEHV (180 aa)). 53-60 (AQTGTGKT) serves as a coordination point for ATP. A DEAD box motif is present at residues 165-168 (DEAD). Residues 245 to 390 (ALLQTLIEEE…QSDYDTSALL (146 aa)) form the Helicase C-terminal domain. A disordered region spans residues 394-434 (PAPIRLQRRPPQNRRNGSNNGQRQSGNRKHSRPRPPRSPQA). Positions 406-418 (NRRNGSNNGQRQS) are enriched in low complexity. The segment covering 419 to 428 (GNRKHSRPRP) has biased composition (basic residues).

It belongs to the DEAD box helicase family. RhlB subfamily. As to quaternary structure, component of the RNA degradosome, which is a multiprotein complex involved in RNA processing and mRNA degradation.

Its subcellular location is the cytoplasm. It carries out the reaction ATP + H2O = ADP + phosphate + H(+). DEAD-box RNA helicase involved in RNA degradation. Has RNA-dependent ATPase activity and unwinds double-stranded RNA. The protein is ATP-dependent RNA helicase RhlB of Aliivibrio salmonicida (strain LFI1238) (Vibrio salmonicida (strain LFI1238)).